The primary structure comprises 577 residues: Chaperonin CPN60-1, mitochondrial (577 aa).

The transit peptide at 1–34 (MYRAAASLASKARQAGNSLATRQVGSRLAWSRNY) directs the protein to the mitochondrion.

It belongs to the chaperonin (HSP60) family.

The protein resides in the mitochondrion. Implicated in mitochondrial protein import and macromolecular assembly. May facilitate the correct folding of imported proteins. May also prevent misfolding and promote the refolding and proper assembly of unfolded polypeptides generated under stress conditions in the mitochondrial matrix. The protein is Chaperonin CPN60-1, mitochondrial (CPN60I) of Zea mays (Maize).